The sequence spans 360 residues: Polyamine aminopropyltransferase 2 (360 aa).

The PABS domain maps to 68–299 (DIWDEISLKE…TDWGFHIAAN (232 aa)). Glutamine 94 is a binding site for S-methyl-5'-thioadenosine. Histidine 123 and aspartate 147 together coordinate spermidine. Residues aspartate 167 and 201 to 202 (DA) each bind S-methyl-5'-thioadenosine. Aspartate 219 functions as the Proton acceptor in the catalytic mechanism.

Belongs to the spermidine/spermine synthase family. Homodimer or homotetramer.

It is found in the cytoplasm. It carries out the reaction S-adenosyl 3-(methylsulfanyl)propylamine + putrescine = S-methyl-5'-thioadenosine + spermidine + H(+). The protein operates within amine and polyamine biosynthesis; spermidine biosynthesis; spermidine from putrescine: step 1/1. In terms of biological role, catalyzes the irreversible transfer of a propylamine group from the amino donor S-adenosylmethioninamine (decarboxy-AdoMet) to putrescine (1,4-diaminobutane) to yield spermidine. The protein is Polyamine aminopropyltransferase 2 of Bacillus anthracis.